An 841-amino-acid polypeptide reads, in one-letter code: Translation initiation factor IF-2 (841 aa).

The interval 94-255 (QRSPEEIEAE…RNAHGFQSPT (162 aa)) is disordered. The span at 96–135 (SPEEIEAERKREMDERRAVENAARQKAEEEAKRRAEEDAR) shows a compositional bias: basic and acidic residues. A compositionally biased stretch (low complexity) spans 136–175 (NQPAAGQPASAPAQPVAAAEPVREAPAAAAPAPASAAPSA). Basic and acidic residues-rich tracts occupy residues 176–217 (DARK…EKAP) and 225–234 (TTDEESDSFR). Over residues 235–248 (RGGRGKGKLKKRNA) the composition is skewed to basic residues. The tr-type G domain occupies 341 to 510 (SRAPVVTVMG…LLQAEVLELK (170 aa)). A G1 region spans residues 350–357 (GHVDHGKT). 350-357 (GHVDHGKT) contacts GTP. The interval 375-379 (GITQH) is G2. A G3 region spans residues 396–399 (DTPG). Residues 396–400 (DTPGH) and 450–453 (NKID) contribute to the GTP site. Residues 450–453 (NKID) form a G4 region. A G5 region spans residues 486–488 (SAK).

The protein belongs to the TRAFAC class translation factor GTPase superfamily. Classic translation factor GTPase family. IF-2 subfamily.

It is found in the cytoplasm. In terms of biological role, one of the essential components for the initiation of protein synthesis. Protects formylmethionyl-tRNA from spontaneous hydrolysis and promotes its binding to the 30S ribosomal subunits. Also involved in the hydrolysis of GTP during the formation of the 70S ribosomal complex. This Pseudomonas syringae pv. tomato (strain ATCC BAA-871 / DC3000) protein is Translation initiation factor IF-2.